A 555-amino-acid chain; its full sequence is Formate--tetrahydrofolate ligase (555 aa).

64–71 (TKAGIGKT) contacts ATP.

It belongs to the formate--tetrahydrofolate ligase family.

It carries out the reaction (6S)-5,6,7,8-tetrahydrofolate + formate + ATP = (6R)-10-formyltetrahydrofolate + ADP + phosphate. The protein operates within one-carbon metabolism; tetrahydrofolate interconversion. This chain is Formate--tetrahydrofolate ligase, found in Bacteroides thetaiotaomicron (strain ATCC 29148 / DSM 2079 / JCM 5827 / CCUG 10774 / NCTC 10582 / VPI-5482 / E50).